Consider the following 81-residue polypeptide: ATP synthase subunit c, chloroplastic (81 aa).

Transmembrane regions (helical) follow at residues 3-23 (PLIPAASVIAAGLAVGLASIG) and 57-77 (LAFMEALTIYGLVVALALLFA).

This sequence belongs to the ATPase C chain family. As to quaternary structure, F-type ATPases have 2 components, F(1) - the catalytic core - and F(0) - the membrane proton channel. F(1) has five subunits: alpha(3), beta(3), gamma(1), delta(1), epsilon(1). F(0) has four main subunits: a(1), b(1), b'(1) and c(10-14). The alpha and beta chains form an alternating ring which encloses part of the gamma chain. F(1) is attached to F(0) by a central stalk formed by the gamma and epsilon chains, while a peripheral stalk is formed by the delta, b and b' chains.

Its subcellular location is the plastid. It is found in the chloroplast thylakoid membrane. Functionally, f(1)F(0) ATP synthase produces ATP from ADP in the presence of a proton or sodium gradient. F-type ATPases consist of two structural domains, F(1) containing the extramembraneous catalytic core and F(0) containing the membrane proton channel, linked together by a central stalk and a peripheral stalk. During catalysis, ATP synthesis in the catalytic domain of F(1) is coupled via a rotary mechanism of the central stalk subunits to proton translocation. In terms of biological role, key component of the F(0) channel; it plays a direct role in translocation across the membrane. A homomeric c-ring of between 10-14 subunits forms the central stalk rotor element with the F(1) delta and epsilon subunits. The sequence is that of ATP synthase subunit c, chloroplastic from Cycas taitungensis (Prince sago).